Consider the following 396-residue polypeptide: Mevalonate kinase (396 aa).

Residues Lys13, Asn55, Ser135, and 140 to 146 each bind ATP; that span reads GAGLGSS. Ser146 serves as the catalytic Proton donor. Positions 146 and 193 each coordinate Mg(2+). Residue Asp204 is the Proton acceptor of the active site.

It belongs to the GHMP kinase family. Mevalonate kinase subfamily. In terms of assembly, homodimer. It depends on Mg(2+) as a cofactor.

Its subcellular location is the cytoplasm. It is found in the peroxisome. It catalyses the reaction (R)-mevalonate + ATP = (R)-5-phosphomevalonate + ADP + H(+). It participates in isoprenoid biosynthesis; isopentenyl diphosphate biosynthesis via mevalonate pathway; isopentenyl diphosphate from (R)-mevalonate: step 1/3. Its activity is regulated as follows. Farnesyl pyrophosphate and geranyl pyrophosphate inhibit mevalonate kinase activity by binding competitively at the ATP-binding sites. Functionally, catalyzes the phosphorylation of mevalonate to mevalonate 5-phosphate, a key step in isoprenoid and cholesterol biosynthesis. This Bos taurus (Bovine) protein is Mevalonate kinase.